The following is a 65-amino-acid chain: Large ribosomal subunit protein bL35 (65 aa).

Residues 28–53 (NGSHNLEKKNRKRTRRLHQSTMLDNA) form a disordered region. The segment covering 36-45 (KNRKRTRRLH) has biased composition (basic residues).

The protein belongs to the bacterial ribosomal protein bL35 family.

This is Large ribosomal subunit protein bL35 from Chlorobium luteolum (strain DSM 273 / BCRC 81028 / 2530) (Pelodictyon luteolum).